A 288-amino-acid polypeptide reads, in one-letter code: Elongation factor Ts (288 aa).

The segment at 82 to 85 is involved in Mg(2+) ion dislocation from EF-Tu; sequence TDFV.

The protein belongs to the EF-Ts family.

The protein resides in the cytoplasm. Associates with the EF-Tu.GDP complex and induces the exchange of GDP to GTP. It remains bound to the aminoacyl-tRNA.EF-Tu.GTP complex up to the GTP hydrolysis stage on the ribosome. The chain is Elongation factor Ts from Chlorobium phaeobacteroides (strain BS1).